The following is a 142-amino-acid chain: Large ribosomal subunit protein uL13 (142 aa).

Belongs to the universal ribosomal protein uL13 family. Part of the 50S ribosomal subunit.

In terms of biological role, this protein is one of the early assembly proteins of the 50S ribosomal subunit, although it is not seen to bind rRNA by itself. It is important during the early stages of 50S assembly. The sequence is that of Large ribosomal subunit protein uL13 from Salmonella agona (strain SL483).